Here is a 334-residue protein sequence, read N- to C-terminus: Mitochondrial glycine transporter (334 aa).

Solcar repeat units lie at residues 22–106, 135–219, and 237–321; these read SKTT…LRQG, LSNW…LKRR, and SSSS…LILR. 6 consecutive transmembrane segments (helical) span residues 28–53, 81–107, 141–166, 194–217, 241–267, and 296–314; these read FVAGLCSGLTSSILLQPADLLKTRVQ, GTLPSALRTGFGSALYFTSLNALRQGI, LATGAIARVAAGFVMMPVTVLKVRYE, GFGATAARDAPYAGLYVLFYEQLK, INFVSGGLAAGLATAITNPFDAVKTRL, and GLGLRITRKALSSALAWTV.

The protein belongs to the mitochondrial carrier (TC 2.A.29) family. SLC25A38 subfamily.

The protein resides in the mitochondrion inner membrane. The enzyme catalyses glycine(in) = glycine(out). In terms of biological role, mitochondrial glycine transporter that imports glycine into the mitochondrial matrix. Plays an important role in providing glycine for the first enzymatic step in heme biosynthesis, the condensation of glycine with succinyl-CoA to produce 5-aminolevulinate (ALA) in the mitochondrial matrix. This Aspergillus clavatus (strain ATCC 1007 / CBS 513.65 / DSM 816 / NCTC 3887 / NRRL 1 / QM 1276 / 107) protein is Mitochondrial glycine transporter.